We begin with the raw amino-acid sequence, 1434 residues long: Nitric oxide synthase 1 (1434 aa).

The segment at 1 to 205 (MEDHMFGVQQ…LQGRGENNEL (205 aa)) is interaction with NOSIP. Positions 17 to 99 (SVRLFKRKVG…ETHVVLILRG (83 aa)) constitute a PDZ domain. 2 disordered regions span residues 112–192 (TGDG…KKAT) and 276–302 (NNPY…PSKC). The segment at 163 to 245 (YDDGQEAGSL…MGIQVDRDLD (83 aa)) is interaction with DYNLL1/PIN. Residues 285–299 (PPTSGKQSPTKNGSP) show a composition bias toward polar residues. Residue Ser-339 participates in (6R)-L-erythro-5,6,7,8-tetrahydrobiopterin binding. Cys-420 contacts heme b. L-arginine contacts are provided by Gln-483, Trp-592, Tyr-593, and Glu-597. Residues Val-682, Trp-683, and Phe-696 each contribute to the (6R)-L-erythro-5,6,7,8-tetrahydrobiopterin site. Tyr-711 is a binding site for heme b. The calmodulin-binding stretch occupies residues 730-750 (KRRAIGFKKLAEAVKFSAKLM). The region spanning 760 to 940 (ATILYATETG…AFRTWAKKVF (181 aa)) is the Flavodoxin-like domain. 8 residues coordinate FMN: Thr-766, Glu-767, Thr-768, Lys-770, Ser-771, Ser-812, Thr-813, and Gly-817. Phosphoserine is present on residues Ser-852, Ser-862, and Ser-863. Ser-891, His-896, Cys-898, Glu-924, and Gln-928 together coordinate FMN. One can recognise an FAD-binding FR-type domain in the interval 995 to 1242 (KRVSAARLLS…VRGAPSFHLP (248 aa)). Arg-1015 is a binding site for NADP(+). Positions 1037, 1178, 1179, 1180, 1181, 1196, and 1198 each coordinate FAD. Ser-1201 is a binding site for NADP(+). 4 residues coordinate FAD: Tyr-1202, Val-1215, Cys-1216, and Ser-1217. Thr-1256, Arg-1289, Ser-1318, Arg-1319, Lys-1325, Tyr-1327, Gln-1329, Asp-1362, Thr-1403, and Arg-1405 together coordinate NADP(+).

The protein belongs to the NOS family. Homodimer. Interacts with DLG4; the interaction possibly being prevented by the association between NOS1 and CAPON. Forms a ternary complex with CAPON and RASD1. Forms a ternary complex with CAPON and SYN1. Interacts with ZDHHC23. Interacts with NOSIP; which may impair its synaptic location. Interacts with HTR4. Interacts with SLC6A4. Interacts with VAC14. Interacts (via N-terminal domain) with DLG4 (via N-terminal tandem pair of PDZ domains). Interacts with SLC6A4. Forms a complex with ASL, ASS1 and SLC7A1; the complex regulates cell-autonomous L-arginine synthesis and citrulline recycling while channeling extracellular L-arginine to nitric oxide synthesis pathway. Interacts with DMD; localizes NOS1 to sarcolemma in muscle cells. Interacts with DYNLL1; inhibits the nitric oxide synthase activity. Requires heme b as cofactor. FAD serves as cofactor. FMN is required as a cofactor. It depends on (6R)-L-erythro-5,6,7,8-tetrahydrobiopterin as a cofactor. In terms of processing, ubiquitinated; mediated by STUB1/CHIP in the presence of Hsp70 and Hsp40 (in vitro). As to expression, isoform 1 is ubiquitously expressed: detected in skeletal muscle and brain, also in testis, lung and kidney, and at low levels in heart, adrenal gland and retina. Not detected in the platelets. Isoform 3 is expressed only in testis. Isoform 4 is detected in testis, skeletal muscle, lung, and kidney, at low levels in the brain, but not in the heart and adrenal gland.

Its subcellular location is the cell membrane. It is found in the sarcolemma. The protein localises to the cell projection. It localises to the dendritic spine. It carries out the reaction 2 L-arginine + 3 NADPH + 4 O2 + H(+) = 2 L-citrulline + 2 nitric oxide + 3 NADP(+) + 4 H2O. Stimulated by calcium/calmodulin. Inhibited by DYNLL1 that prevents the dimerization of the protein. Inhibited by NOSIP. Produces nitric oxide (NO) which is a messenger molecule with diverse functions throughout the body. In the brain and peripheral nervous system, NO displays many properties of a neurotransmitter. Probably has nitrosylase activity and mediates cysteine S-nitrosylation of cytoplasmic target proteins such SRR. In Homo sapiens (Human), this protein is Nitric oxide synthase 1.